The chain runs to 479 residues: MPTSAKALTKRLIEIPEMRRIQHLHFIGIGGSGMCGIAEVMNNQGYQVSGSDITESLVTKRLAQIGIDIAIGHDSKNIANADVIVVSSAIDRSNPEVKAALEARLPVVRRADMLGELMRYRHGIAIAGAHGKTTTTSLLTTMMAEGNLDPTYVIGGKLNASGKNAALGSSRFLIAEADESDASFLSLHPMAAIVTNIDQDHMETYGNSFDKLKAAYIQFLQNMPFYGLAVVCGDDPELYAMIDDIGRPVLTFGLEPFNDVQAVDLVTEGTKTHFTVLRRDHEPLRLTLNIPGVHNVYNALAAITMATDEGVDDAAITRALQKFEGVGRRFEQHASVEIDDGNVLLIDDYGHHPKEVDATIKAARQSFPERRLVMMFQPHRYSRTRDCFDDFVEVLSSVDELLLLDVYSAGESPIAGADTKALARSIRLRGAVEPTIVDKDNIAPVMQRLLKAGDMLITQGAGNVGQIAIDLAANNLYIK.

An ATP-binding site is contributed by 128–134; that stretch reads GAHGKTT.

This sequence belongs to the MurCDEF family.

Its subcellular location is the cytoplasm. It catalyses the reaction UDP-N-acetyl-alpha-D-muramate + L-alanine + ATP = UDP-N-acetyl-alpha-D-muramoyl-L-alanine + ADP + phosphate + H(+). It participates in cell wall biogenesis; peptidoglycan biosynthesis. Functionally, cell wall formation. The polypeptide is UDP-N-acetylmuramate--L-alanine ligase (Psychrobacter cryohalolentis (strain ATCC BAA-1226 / DSM 17306 / VKM B-2378 / K5)).